Consider the following 225-residue polypeptide: Uracil-DNA glycosylase (225 aa).

The active-site Proton acceptor is the D65.

This sequence belongs to the uracil-DNA glycosylase (UDG) superfamily. UNG family.

Its subcellular location is the cytoplasm. It carries out the reaction Hydrolyzes single-stranded DNA or mismatched double-stranded DNA and polynucleotides, releasing free uracil.. In terms of biological role, excises uracil residues from the DNA which can arise as a result of misincorporation of dUMP residues by DNA polymerase or due to deamination of cytosine. The polypeptide is Uracil-DNA glycosylase (Lysinibacillus sphaericus (strain C3-41)).